A 169-amino-acid polypeptide reads, in one-letter code: Cilia- and flagella-associated protein HOATZ (169 aa).

Disordered regions lie at residues Met-1 to Pro-21, Ser-52 to Asn-89, and Lys-144 to Asp-169. Over residues Ser-75 to Asn-89 the composition is skewed to polar residues.

The protein belongs to the HOATZ family.

Its subcellular location is the cytoplasm. It is found in the cell projection. It localises to the cilium. Functionally, required for motile ciliogenesis and flagellar genesis by mediating the maturation of the glycolytic enzyme ENO4. This is Cilia- and flagella-associated protein HOATZ from Homo sapiens (Human).